We begin with the raw amino-acid sequence, 258 residues long: Proteasome subunit alpha type-3 (258 aa).

Residues Lys100, Lys199, and Lys231 each participate in a glycyl lysine isopeptide (Lys-Gly) (interchain with G-Cter in ubiquitin) cross-link.

It belongs to the peptidase T1A family. In terms of assembly, the 26S proteasome consists of a 20S proteasome core and two 19S regulatory subunits. The 20S proteasome core is composed of 28 subunits that are arranged in four stacked rings, resulting in a barrel-shaped structure. The two end rings are each formed by seven alpha subunits, and the two central rings are each formed by seven beta subunits. The catalytic chamber with the active sites is on the inside of the barrel.

The protein localises to the cytoplasm. It localises to the nucleus. In terms of biological role, the proteasome degrades poly-ubiquitinated proteins in the cytoplasm and in the nucleus. It is essential for the regulated turnover of proteins and for the removal of misfolded proteins. The proteasome is a multicatalytic proteinase complex that is characterized by its ability to cleave peptides with Arg, Phe, Tyr, Leu, and Glu adjacent to the leaving group at neutral or slightly basic pH. It has an ATP-dependent proteolytic activity. This is Proteasome subunit alpha type-3 (PRE9) from Saccharomyces cerevisiae (strain ATCC 204508 / S288c) (Baker's yeast).